Reading from the N-terminus, the 423-residue chain is WD repeat and SOCS box-containing protein 1 (423 aa).

The segment at 76-100 (DRSSGAGPRRLSRQNSEGSLLPGEP) is disordered. WD repeat units lie at residues 125–166 (SRCV…LLLN), 169–209 (DHTD…NMVK), 213–252 (GHQN…LIRK), 255–294 (GHHN…VLLE), and 310–347 (ANDR…KSPQ). Positions 373–423 (DGSVHFWASPRSIASLQHLCRMTLRRVMPTQQVYTLPIPFSMQDYLAYKTL) constitute an SOCS box domain.

In terms of assembly, component of a probable ECS E3 ubiquitin-protein ligase complex that contains the Elongin BC complex.

It functions in the pathway protein modification; protein ubiquitination. In terms of biological role, probable substrate-recognition component of a SCF-like ECS (Elongin-Cullin-SOCS-box protein) E3 ubiquitin-protein ligase complex which mediates the ubiquitination and subsequent proteasomal degradation of target proteins. This is WD repeat and SOCS box-containing protein 1 (wsb1) from Danio rerio (Zebrafish).